The primary structure comprises 916 residues: Probable dipeptidyl-aminopeptidase B (916 aa).

Disordered regions lie at residues 1–35 (MGRT…SGLS) and 67–86 (DAEA…KLGS). Topologically, residues 1–92 (MGRTGDLENA…KLGSGSRTRQ (92 aa)) are cytoplasmic. Positions 21 to 35 (TSGTSSRSSTDSGLS) are enriched in low complexity. Residues 93 to 113 (IFWALVILCLGGWVLALVLFL) form a helical; Signal-anchor for type II membrane protein membrane-spanning segment. Topologically, residues 114-916 (THGRASSQTA…VKRSVPAFAH (803 aa)) are vacuolar. Residues Asn349 and Asn640 are each glycosylated (N-linked (GlcNAc...) asparagine). Catalysis depends on Ser754, which acts as the Charge relay system. Asn808 and Asn813 each carry an N-linked (GlcNAc...) asparagine glycan. Residues Asp831 and His864 each act as charge relay system in the active site.

The protein belongs to the peptidase S9B family.

Its subcellular location is the vacuole membrane. It catalyses the reaction Release of an N-terminal dipeptide, Xaa-Yaa-|-Zaa-, from a polypeptide, preferentially when Yaa is Pro, provided Zaa is neither Pro nor hydroxyproline.. Type IV dipeptidyl-peptidase which removes N-terminal dipeptides sequentially from polypeptides having unsubstituted N-termini provided that the penultimate residue is proline. In Aspergillus flavus (strain ATCC 200026 / FGSC A1120 / IAM 13836 / NRRL 3357 / JCM 12722 / SRRC 167), this protein is Probable dipeptidyl-aminopeptidase B (dapB).